A 111-amino-acid polypeptide reads, in one-letter code: MVRTKADSVPGTYRKVVAARAPRKVLGSSTSATNSTSVSSRKAENKYAGGNPVCVRPTPKWQKGIGEFFRLSPKDSEKENQIPEEAGSSGLGKAKRKACPLQPDHTNDEKE.

A Phosphoserine modification is found at Ser-8. Lys-15 is covalently cross-linked (Glycyl lysine isopeptide (Lys-Gly) (interchain with G-Cter in ubiquitin)). A D-box motif is present at residues 23-34 (RKVLGSSTSATN). Residues 23–111 (RKVLGSSTSA…QPDHTNDEKE (89 aa)) form a disordered region. Residue Lys-24 is modified to N6-acetyllysine; alternate. Residue Lys-24 forms a Glycyl lysine isopeptide (Lys-Gly) (interchain with G-Cter in ubiquitin); alternate linkage. Phosphoserine occurs at positions 28, 31, and 72. The segment covering 28–40 (SSTSATNSTSVSS) has biased composition (low complexity). Residues 62–72 (QKGIGEFFRLS) carry the PIP-box motif. A compositionally biased stretch (basic and acidic residues) spans 72–81 (SPKDSEKENQ). A KEN box motif is present at residues 78–80 (KEN). The Initiation motif signature appears at 85–97 (EAGSSGLGKAKRK).

In terms of assembly, interacts (when monoubiquitinated at Lys-15 and Lys-24) with PCNA. Interacts with isoform 2/p33ING1b of ING1. Interacts with BRCA1. In terms of processing, monoubiquitinated at Lys-15 and Lys-24 during normal S phase, promoting its association with PCNA. Also diubiquitinated at these 2 sites. Following DNA damage, monoubiquitin chains at Lys-15 and Lys-24 are probably extended, leading to disrupt the interaction with PCNA. Polyubiquitinated by the APC/C complex at the mitotic exit, leading to its degradation by the proteasome. Expressed predominantly in liver, pancreas and placenta. Not detected in heart or brain. Highly expressed in a number of tumors, especially esophageal tumors, in anaplastic thyroid carcinomas, adrenocortical carcinomas, and in non-small-cell lung cancer lines.

The protein localises to the nucleus. It localises to the cytoplasm. Its subcellular location is the perinuclear region. In terms of biological role, PCNA-binding protein that acts as a regulator of DNA repair during DNA replication. Following DNA damage, the interaction with PCNA is disrupted, facilitating the interaction between monoubiquitinated PCNA and the translesion DNA synthesis DNA polymerase eta (POLH) at stalled replisomes, facilitating the bypass of replication-fork-blocking lesions. Also acts as a regulator of centrosome number. This Homo sapiens (Human) protein is PCNA-associated factor.